A 295-amino-acid chain; its full sequence is ATP synthase gamma chain (295 aa).

This sequence belongs to the ATPase gamma chain family. F-type ATPases have 2 components, CF(1) - the catalytic core - and CF(0) - the membrane proton channel. CF(1) has five subunits: alpha(3), beta(3), gamma(1), delta(1), epsilon(1). CF(0) has three main subunits: a, b and c.

It is found in the cell inner membrane. Its function is as follows. Produces ATP from ADP in the presence of a proton gradient across the membrane. The gamma chain is believed to be important in regulating ATPase activity and the flow of protons through the CF(0) complex. This is ATP synthase gamma chain from Campylobacter concisus (strain 13826).